The sequence spans 443 residues: Gasdermin-A2 (443 aa).

A triggers pyroptosis region spans residues Met1–Gly249. A cardiolipin is bound at residue Arg9–Arg13. 4 beta stranded membrane-spanning segments follow: residues Asn78–Val95, Met99–Val120, Val164–Asn179, and Leu183–Ile197. Positions Gly249–Thr312 form a coiled coil.

This sequence belongs to the gasdermin family. Homooligomer; homooligomeric ring-shaped pore complex containing 18-36 subunits when inserted in the membrane. Cleavage relieves autoinhibition by releasing the N-terminal moiety (Gasdermin-A2, N-terminal) that initiates pyroptosis. In contrast to Gsdma, not cleaved by bacterial effector protein SpeB. Post-translationally, palmitoylated. As to expression, expressed in the gastrointestinal tract, specifically from the middle to the upper region of the gastric mucosa in the glandular stomach.

It localises to the cytoplasm. Its subcellular location is the perinuclear region. It is found in the cytosol. The protein localises to the cell membrane. With respect to regulation, the full-length protein before cleavage is inactive: intramolecular interactions between N- and C-terminal domains mediate autoinhibition in the absence of activation signal. The intrinsic pyroptosis-inducing activity is carried by the released N-terminal moiety (Gasdermin-A2, N-terminal). Its function is as follows. This form constitutes the precursor of the pore-forming protein and acts as a sensor of infection: upon bacterial infection, specifically cleaved by some bacterial effector protein, releasing the N-terminal moiety (Gasdermin-A2, N-terminal) that binds to membranes and forms pores, triggering pyroptosis. Functionally, pore-forming protein that causes membrane permeabilization and pyroptosis. Released upon cleavage of Gasdermin-A2, and binds to membrane inner leaflet lipids. Homooligomerizes within the membrane and forms pores of 10-15 nanometers (nm) of inner diameter, triggering pyroptosis. Binds to membrane inner leaflet lipids, such as phosphatidylinositol (4,5)-bisphosphate. The sequence is that of Gasdermin-A2 from Mus musculus (Mouse).